Consider the following 929-residue polypeptide: Valine--tRNA ligase (929 aa).

The short motif at 40-50 (PNVTGHLHMGH) is the 'HIGH' region element. A 'KMSKS' region motif is present at residues 522-526 (KMSKS). Lys525 contacts ATP. A coiled-coil region spans residues 855 to 926 (LAGLIDKEAE…LEQQHAEITD (72 aa)).

This sequence belongs to the class-I aminoacyl-tRNA synthetase family. ValS type 1 subfamily. As to quaternary structure, monomer.

The protein localises to the cytoplasm. It catalyses the reaction tRNA(Val) + L-valine + ATP = L-valyl-tRNA(Val) + AMP + diphosphate. Functionally, catalyzes the attachment of valine to tRNA(Val). As ValRS can inadvertently accommodate and process structurally similar amino acids such as threonine, to avoid such errors, it has a 'posttransfer' editing activity that hydrolyzes mischarged Thr-tRNA(Val) in a tRNA-dependent manner. The polypeptide is Valine--tRNA ligase (Nitrosococcus oceani (strain ATCC 19707 / BCRC 17464 / JCM 30415 / NCIMB 11848 / C-107)).